We begin with the raw amino-acid sequence, 587 residues long: Ran GTPase-activating protein 1 (587 aa).

Position 2 is an N-acetylalanine (Ala2). Residue Lys8 forms a Glycyl lysine isopeptide (Lys-Gly) (interchain with G-Cter in SUMO1); alternate linkage. Residue Lys8 forms a Glycyl lysine isopeptide (Lys-Gly) (interchain with G-Cter in SUMO2); alternate linkage. Lys15 participates in a covalent cross-link: Glycyl lysine isopeptide (Lys-Gly) (interchain with G-Cter in SUMO2). A Phosphoserine modification is found at Ser24. LRR repeat units follow at residues 48-71 (FDSL…VIAK), 111-134 (GAQL…GFEA), 207-230 (IGTL…ALAQ), and 235-258 (NPLL…AMAE). Residue Lys279 forms a Glycyl lysine isopeptide (Lys-Gly) (interchain with G-Cter in SUMO2) linkage. 2 LRR repeats span residues 292-319 (LPKL…AMAD) and 320-343 (KAEL…QLQE). Ser301 is subject to Phosphoserine. Residues 357 to 430 (LSDDEDEEEE…EPAPVLSSPP (74 aa)) form a disordered region. Ser358 is modified (phosphoserine). Residues 358–397 (SDDEDEEEEEEGEEEEEEAEEEEEEDEEEEEEEEEEEEEE) are compositionally biased toward acidic residues. A compositionally biased stretch (polar residues) spans 400-410 (QRGQGEKSATP). The residue at position 409 (Thr409) is a Phosphothreonine; by CDK2. Phosphoserine occurs at positions 428 and 435. Thr436 carries the post-translational modification Phosphothreonine. Position 442 is a phosphoserine (Ser442). Lys452 is covalently cross-linked (Glycyl lysine isopeptide (Lys-Gly) (interchain with G-Cter in SUMO2)). An SUMO conjugation motif is present at residues 523–526 (LKSE). Lys524 is covalently cross-linked (Glycyl lysine isopeptide (Lys-Gly) (interchain with G-Cter in SUMO1); alternate). A Glycyl lysine isopeptide (Lys-Gly) (interchain with G-Cter in SUMO2); alternate cross-link involves residue Lys524. Lys524 bears the N6-acetyllysine; alternate mark. Lys586 is covalently cross-linked (Glycyl lysine isopeptide (Lys-Gly) (interchain with G-Cter in SUMO2)).

Belongs to the RNA1 family. Homodimer. Interacts with RAN. Forms a complex with RANBP2/NUP358, NXF1 and NXT1. Forms a tight complex in association with RANBP2/NUP358 and UBE2I/UBC9, the ubiquitin-conjugating enzyme E2. Interacts with UBE2I; the interaction conjugates SUMO1 to RANGAP1, and subsequently stabilizes interactions of sumoylated RANGAP1 with RANBP2/NUP358. The complex composed of RANBP2, SUMO1, RANGAP1 and UBE2I associates with nuclear pore complexes. Identified in a complex composed of RAN, RANBP2, sumoylated RANGAP1, UBE2I and XPO1. Identified in a complex composed of RAN, RANGAP1 and RANBP1. Interacts with TRAF6. Interacts with SUMO1 and SENP1. Interacts (when sumoylated) with MYCBP2; interaction inhibits MYCBP2 E3 ubiquitin-protein ligase activity and promotes MYCBP2 translocation to the nucleus. Post-translationally, phosphorylation occurs before nuclear envelope breakdown and continues throughout mitosis. Phosphorylated by the M-phase kinase cyclin B/Cdk1, in vitro. Differential timimg of dephosphorylation occurs during phases of mitosis. The phosphorylated form remains associated with RANBP2/NUP358 and the SUMO E2-conjugating enzyme, UBE2I, on nuclear pore complex (NPC) diassembly and during mitosis. In terms of processing, sumoylated. Sumoylation is necessary for targeting to the nuclear envelope (NE), and for association with mitotic spindles and kinetochores during mitosis. Also required for interaction with RANBP2 and is mediated by UBE2I. Desumoylated by HINT1. In terms of tissue distribution, highly expressed in brain, thymus and testis.

It localises to the cytoplasm. Its subcellular location is the nucleus. The protein resides in the nucleoplasm. It is found in the nucleus envelope. The protein localises to the chromosome. It localises to the centromere. Its subcellular location is the kinetochore. The protein resides in the cytoskeleton. It is found in the spindle. Its function is as follows. GTPase activator for RAN. Converts cytoplasmic GTP-bound RAN to GDP-bound RAN, which is essential for RAN-mediated nuclear import and export. Mediates dissociation of cargo from nuclear export complexes containing XPO1, RAN and RANBP2 after nuclear export. This Homo sapiens (Human) protein is Ran GTPase-activating protein 1 (RANGAP1).